The primary structure comprises 406 residues: Putative odorant receptor 65b (406 aa).

Over 1 to 55 the chain is Cytoplasmic; sequence MDIQRFLKFYKVGWKTYRDPLMEASHSSIYYWREQMKAMALFTTTEERLLPYRSK. Residues 56–76 traverse the membrane as a helical segment; that stretch reads WHTLVYIQMVIFFASMSFGLT. Residues 77–88 are Extracellular-facing; the sequence is ESMGDHVQMGRD. Residues 89-109 form a helical membrane-spanning segment; that stretch reads LAFILGAFFIIFKTYYFCWYG. Residues 110-144 are Cytoplasmic-facing; sequence DELDQVISDLDALHPWAQKGPNPVEYQTGKRWYFV. The chain crosses the membrane as a helical span at residues 145–165; that stretch reads MAFFLATSWSFFLCILLLLLI. Residues 166–218 are Extracellular-facing; that stretch reads TSPMWVHQQNLPFHAAFPFQWHEKSLHPISHAIIYLFQSYFAVYCLTWLLCIE. Residues 219 to 239 traverse the membrane as a helical segment; the sequence is GLSICIYAEITFGIEVLCLEL. Topologically, residues 240-275 are cytoplasmic; that stretch reads RQIHRHNYGLQELRMETNRLVKLHQKIVEILDRTND. A helical membrane pass occupies residues 276 to 296; the sequence is VFHGTLIMQMGVNFSLVSLSV. Topologically, residues 297–307 are extracellular; it reads LEAVEARKDPK. Residues 308 to 328 form a helical membrane-spanning segment; the sequence is VVAQFAVLMLLALGHLSMWSY. The Cytoplasmic portion of the chain corresponds to 329-381; the sequence is CGDQLSQKSLQISEAAYEAYDPTKGSKDVYRDLCVIIRRGQDPLIMRASPFPS. A helical transmembrane segment spans residues 382–402; sequence FNLINYSAILNQCYGILTFLL. Over 403 to 406 the chain is Extracellular; it reads KTLD.

Belongs to the insect chemoreceptor superfamily. Heteromeric odorant receptor channel (TC 1.A.69) family. Or49a subfamily. In terms of assembly, interacts with Orco. Complexes exist early in the endomembrane system in olfactory sensory neurons (OSNs), coupling these complexes to the conserved ciliary trafficking pathway.

The protein localises to the cell membrane. Its function is as follows. Odorant receptor which mediates acceptance or avoidance behavior, depending on its substrates. The odorant receptor repertoire encodes a large collection of odor stimuli that vary widely in identity, intensity, and duration. May form a complex with Orco to form odorant-sensing units, providing sensitive and prolonged odorant signaling and calcium permeability. This is Putative odorant receptor 65b (Or65b) from Drosophila melanogaster (Fruit fly).